The primary structure comprises 410 residues: Mating-type locus allele B6 protein (410 aa).

The interval 1-110 (MSRDPKLSLS…VNVASPAVEY (110 aa)) is variable domain between B alleles. A DNA-binding region (homeobox; TALE-type) is located at residues 107 to 184 (AVEYRNLSED…NARRRSGWSH (78 aa)). The highly conserved between B alleles stretch occupies residues 111-410 (RNLSEDLPAY…PFFCLSIAFV (300 aa)). Disordered stretches follow at residues 202-224 (RAKL…PSDD), 278-335 (TPKP…TPEL), and 373-393 (KARG…QQPD). Polar residues predominate over residues 205-219 (LSSSNQSTPPSLTSE). The Nuclear localization signal motif lies at 276 to 308 (KKTPKPGMPRPVTTVAKRQPARKTKPAAKPKSR). Residues 294 to 307 (QPARKTKPAAKPKS) show a composition bias toward basic residues. Over residues 312-335 (PRASTTPSIDSTLDSSKLESTPEL) the composition is skewed to polar residues. Positions 333-410 (PELSMCSTAD…PFFCLSIAFV (78 aa)) are not essential for B6 function. Residues 375–388 (RGNRKVKALPKRAG) show a composition bias toward basic residues.

The protein belongs to the TALE/M-ATYP homeobox family.

The protein localises to the nucleus. Its function is as follows. The B locus has at least 25 alleles, and any combination of two different B alleles yields a multimeric regulatory protein, that activates genes responsible for the pathogenicity and for the sexual development of the fungus within the corn plant. The protein is Mating-type locus allele B6 protein of Mycosarcoma maydis (Corn smut fungus).